A 415-amino-acid chain; its full sequence is uncharacterized protein (415 aa).

The 55-residue stretch at 1 to 55 (MSTGTVTIDRLGAQGDGVARTEAGPVFAPFTLPGETVSLAVNKANGTLISLKEAS) folds into the TRAM domain. Residues Cys-63, Cys-75, Cys-78, and Cys-152 each coordinate [4Fe-4S] cluster. S-adenosyl-L-methionine is bound by residues Gln-252, Phe-279, Glu-299, and Asp-347. Cys-373 serves as the catalytic Nucleophile.

Belongs to the class I-like SAM-binding methyltransferase superfamily. RNA M5U methyltransferase family.

This is an uncharacterized protein from Rhizobium meliloti (strain 1021) (Ensifer meliloti).